The chain runs to 137 residues: 2-iminobutanoate/2-iminopropanoate deaminase (137 aa).

Residue serine 2 is modified to N-acetylserine. N6-succinyllysine is present on residues lysine 13 and lysine 67. Position 74 is a phosphothreonine (threonine 74). Residue serine 136 is modified to Phosphoserine.

In terms of assembly, homotrimer. Interacts with YTHDF2. As to expression, expressed by various malignant neoplasms.

The protein resides in the cytoplasm. Its subcellular location is the nucleus. It localises to the peroxisome. The protein localises to the mitochondrion. It catalyses the reaction 2-iminobutanoate + H2O = 2-oxobutanoate + NH4(+). The enzyme catalyses 2-iminopropanoate + H2O = pyruvate + NH4(+). Its function is as follows. Catalyzes the hydrolytic deamination of enamine/imine intermediates that form during the course of normal metabolism. May facilitate the release of ammonia from these potentially toxic reactive metabolites, reducing their impact on cellular components. It may act on enamine/imine intermediates formed by several types of pyridoxal-5'-phosphate-dependent dehydratases including L-threonine dehydratase. Also promotes endoribonucleolytic cleavage of some transcripts by promoting recruitment of the ribonuclease P/MRP complex. Acts by bridging YTHDF2 and the ribonuclease P/MRP complex. RIDA/HRSP12 binds to N6-methyladenosine (m6A)-containing mRNAs containing a 5'-GGUUC-3' motif: cooperative binding of RIDA/HRSP12 and YTHDF2 to such transcripts lead to recruitment of the ribonuclease P/MRP complex and subsequent endoribonucleolytic cleavage. This chain is 2-iminobutanoate/2-iminopropanoate deaminase, found in Capra hircus (Goat).